The primary structure comprises 313 residues: Coproporphyrin III ferrochelatase (313 aa).

2 residues coordinate Fe(2+): His191 and Glu270.

Belongs to the ferrochelatase family.

Its subcellular location is the cytoplasm. The catalysed reaction is Fe-coproporphyrin III + 2 H(+) = coproporphyrin III + Fe(2+). Its pathway is porphyrin-containing compound metabolism; protoheme biosynthesis. Functionally, involved in coproporphyrin-dependent heme b biosynthesis. Catalyzes the insertion of ferrous iron into coproporphyrin III to form Fe-coproporphyrin III. In Enterococcus faecalis (strain ATCC 700802 / V583), this protein is Coproporphyrin III ferrochelatase.